The chain runs to 429 residues: MRVLVLGSGVIGVTSAYYLARAGHEVTVVDREAGPALDTSFANAGQISPGYASPWAAPGVPLKAIKWMFQQHAPLSIRPDGTLFQLQWMWQMLRNCNAASYAENKERMVRLAEYSRDCIRALRAETGIAYEGRQQGTLQVFRTQQQLDGAANDIAVLERAGVPYELLSRDDLVRSEPGLASTRHKLAGGLRLPNDETGDCQLFTTRLAAMAEKLGVRFRFNSRINSLIVQNDAVRGALVDGEAMTADLVVVAMGSYSTPFLKNLVGVPVYPLKGFSITVPMTDAERSPVSTVLDETYKVAITRFDDRIRVGGMAQIVGYDKRLDPGKRKTLEFVVSDLFPGGGDVSRATFWTGLRPMTPDGTPIVGPTPVRGLWINTGHGTLGWTMACGSGQLLSDLVSGRSPAIRADDLSVYRYLRGGQAPATKPALA.

3–17 is an FAD binding site; sequence VLVLGSGVIGVTSAY.

The protein belongs to the DadA oxidoreductase family. It depends on FAD as a cofactor.

It catalyses the reaction a D-alpha-amino acid + A + H2O = a 2-oxocarboxylate + AH2 + NH4(+). In terms of biological role, oxidative deamination of D-amino acids. The protein is D-amino acid dehydrogenase 1 (dadA1) of Ralstonia nicotianae (strain ATCC BAA-1114 / GMI1000) (Ralstonia solanacearum).